The primary structure comprises 650 residues: Threonine--tRNA ligase (650 aa).

One can recognise a TGS domain in the interval 3-65 (DLVKVTLPDG…DRDARLEIVT (63 aa)). The segment at 248 to 548 (DHRRLGPQLG…LTEHYAGAFP (301 aa)) is catalytic. Cysteine 349, histidine 400, and histidine 525 together coordinate Zn(2+).

It belongs to the class-II aminoacyl-tRNA synthetase family. Homodimer. Zn(2+) is required as a cofactor.

The protein localises to the cytoplasm. It carries out the reaction tRNA(Thr) + L-threonine + ATP = L-threonyl-tRNA(Thr) + AMP + diphosphate + H(+). In terms of biological role, catalyzes the attachment of threonine to tRNA(Thr) in a two-step reaction: L-threonine is first activated by ATP to form Thr-AMP and then transferred to the acceptor end of tRNA(Thr). Also edits incorrectly charged L-seryl-tRNA(Thr). The polypeptide is Threonine--tRNA ligase (Anaeromyxobacter dehalogenans (strain 2CP-C)).